The chain runs to 182 residues: Large ribosomal subunit protein uL5 (182 aa).

It belongs to the universal ribosomal protein uL5 family. In terms of assembly, part of the 50S ribosomal subunit; part of the 5S rRNA/L5/L18/L25 subcomplex. Contacts the 5S rRNA and the P site tRNA. Forms a bridge to the 30S subunit in the 70S ribosome.

This is one of the proteins that bind and probably mediate the attachment of the 5S RNA into the large ribosomal subunit, where it forms part of the central protuberance. In the 70S ribosome it contacts protein S13 of the 30S subunit (bridge B1b), connecting the 2 subunits; this bridge is implicated in subunit movement. Contacts the P site tRNA; the 5S rRNA and some of its associated proteins might help stabilize positioning of ribosome-bound tRNAs. This is Large ribosomal subunit protein uL5 from Mycoplasma mobile (strain ATCC 43663 / 163K / NCTC 11711) (Mesomycoplasma mobile).